A 591-amino-acid chain; its full sequence is Putative F-box protein At1g32140 (591 aa).

An F-box domain is found at 2-49; that stretch reads TMMSDLSLDLVEEILCRVPITSLKAVRSSCKLWNVLSKNRILCKTEAR. Residues 567 to 581 show a composition bias toward basic residues; it reads AGRKRKEKKTKRKSK. A disordered region spans residues 567–591; that stretch reads AGRKRKEKKTKRKSKDKQMKLSNKV.

This Arabidopsis thaliana (Mouse-ear cress) protein is Putative F-box protein At1g32140.